We begin with the raw amino-acid sequence, 383 residues long: uncharacterized protein (383 aa).

A run of 2 helical transmembrane segments spans residues 49 to 69 (VDLL…GCVA) and 347 to 367 (LLGG…PVAG).

This sequence to M.tuberculosis Rv0874c.

It localises to the cell membrane. This is an uncharacterized protein from Mycobacterium tuberculosis (strain CDC 1551 / Oshkosh).